A 715-amino-acid polypeptide reads, in one-letter code: Polyribonucleotide nucleotidyltransferase (715 aa).

Positions 493 and 499 each coordinate Mg(2+). Residues 560 to 619 form the KH domain; it reads PRMITVKINPEKIRDVIGKGGSVIRALTEETGTTIDISDDGVVTIASTSSEGMAEAKKRI. Positions 629-697 constitute an S1 motif domain; sequence GQVYEGTVLK…EKGRVRLSAK (69 aa).

This sequence belongs to the polyribonucleotide nucleotidyltransferase family. Requires Mg(2+) as cofactor.

Its subcellular location is the cytoplasm. The catalysed reaction is RNA(n+1) + phosphate = RNA(n) + a ribonucleoside 5'-diphosphate. Its function is as follows. Involved in mRNA degradation. Catalyzes the phosphorolysis of single-stranded polyribonucleotides processively in the 3'- to 5'-direction. This is Polyribonucleotide nucleotidyltransferase from Burkholderia orbicola (strain MC0-3).